The chain runs to 443 residues: Omega-6 fatty acid desaturase, chloroplastic (443 aa).

The transit peptide at 1–64 (MASRIADSLF…AKKRIGCIKA (64 aa)) directs the protein to the chloroplast. Positions 166–170 (HDCAH) match the Histidine box-1 motif. Positions 202-206 (HDRHH) match the Histidine box-2 motif. The Histidine box-3 signature appears at 362-366 (HIPHH).

This sequence belongs to the fatty acid desaturase type 1 family.

It is found in the plastid. It localises to the chloroplast membrane. The enzyme catalyses a (9Z)-octadecenoyl-containing glycerolipid + 2 reduced [2Fe-2S]-[ferredoxin] + O2 + 2 H(+) = a (9Z,12Z)-octadecadienoyl-containing glycerolipid + 2 oxidized [2Fe-2S]-[ferredoxin] + 2 H2O. It participates in lipid metabolism; polyunsaturated fatty acid biosynthesis. Functionally, chloroplast omega-6 fatty acid desaturase introduces the second double bond in the biosynthesis of 16:3 and 18:3 fatty acids, important constituents of plant membranes. It is thought to use ferredoxin as an electron donor and to act on fatty acids esterified to galactolipids, sulfolipids and phosphatidylglycerol. This chain is Omega-6 fatty acid desaturase, chloroplastic, found in Brassica napus (Rape).